The following is a 72-amino-acid chain: UPF0729 protein C18orf32 homolog (72 aa).

The segment at 1-33 is necessary for its localzation to the endoplasmic reticulum and lipid droplets; it reads MVCIPCIVIPVLLWIFKKFLEPYIYPVVSRIWP. The disordered stretch occupies residues 36-72; it reads AVQQSGDKNMSKVDCKGAGTNGLPTKGPTEVSDKKKD.

Belongs to the UPF0729 family. As to quaternary structure, interacts with DERL1 and AMFR. In terms of processing, undergoes ER-associated degradation (ERAD).

The protein localises to the endoplasmic reticulum. The protein resides in the lipid droplet. May activate the NF-kappa-B signaling pathway. The sequence is that of UPF0729 protein C18orf32 homolog from Mus musculus (Mouse).